The sequence spans 254 residues: MAVDFTTDELDEVASLIARSSCNVALTGAGVSTASGIPDFRGPQGVWRRVDPEKFEISYFYNNPDEVWDLFVKYLLPAFNVKPNPAHYALAEMERLGKLCAVITQNVDRLHQAAGSKNVIELHGALEYAVCTNCGSKYALAEALKWRKSGAPRCPKCGGVIKPDVVFFGEPLPQDALREAFMLAEMAEVFMAIGTSLAVYPANQLPLVAKKRGAKLVIINADETYYDFFADYIIRGRAEEVLPKLLDRLRGMLF.

Residues 3–252 (VDFTTDELDE…PKLLDRLRGM (250 aa)) enclose the Deacetylase sirtuin-type domain. NAD(+) contacts are provided by alanine 29, threonine 33, phenylalanine 40, arginine 41, glutamine 105, valine 107, aspartate 108, and histidine 123. Phenylalanine 40 contacts nicotinamide. Valine 107 and aspartate 108 together coordinate nicotinamide. The active-site Proton acceptor is histidine 123. Positions 131, 134, 154, and 157 each coordinate Zn(2+). NAD(+) is bound by residues threonine 195, serine 196, and asparagine 220.

Belongs to the sirtuin family. Class U subfamily. Zn(2+) is required as a cofactor.

The protein resides in the cytoplasm. The catalysed reaction is N(6)-acetyl-L-lysyl-[protein] + NAD(+) + H2O = 2''-O-acetyl-ADP-D-ribose + nicotinamide + L-lysyl-[protein]. In terms of biological role, NAD-dependent protein deacetylase which modulates the activities of several enzymes which are inactive in their acetylated form. Deacetylates the N-terminal lysine residue of Alba, the major archaeal chromatin protein and that, in turn, increases Alba's DNA binding affinity, thereby repressing transcription. The chain is NAD-dependent protein deacetylase 1 from Pyrobaculum aerophilum (strain ATCC 51768 / DSM 7523 / JCM 9630 / CIP 104966 / NBRC 100827 / IM2).